A 179-amino-acid chain; its full sequence is Photosystem I assembly protein Ycf3 (179 aa).

TPR repeat units follow at residues A29–P62, S66–L99, and N126–N159.

The protein belongs to the Ycf3 family.

The protein localises to the plastid. The protein resides in the chloroplast thylakoid membrane. Its function is as follows. Essential for the assembly of the photosystem I (PSI) complex. May act as a chaperone-like factor to guide the assembly of the PSI subunits. The chain is Photosystem I assembly protein Ycf3 from Trieres chinensis (Marine centric diatom).